We begin with the raw amino-acid sequence, 379 residues long: Chaperone protein DnaJ (379 aa).

Residues 5-70 (DYYELLEVSR…QKRAAYDQFG (66 aa)) form the J domain. A CR-type zinc finger spans residues 135-213 (GKEVEITVPR…CHGQGRVRES (79 aa)). 8 residues coordinate Zn(2+): Cys148, Cys151, Cys165, Cys168, Cys187, Cys190, Cys201, and Cys204. 4 CXXCXGXG motif repeats span residues 148–155 (CTVCEGSG), 165–172 (CETCQGMG), 187–194 (CPTCHGEG), and 201–208 (CASCHGQG).

This sequence belongs to the DnaJ family. In terms of assembly, homodimer. Zn(2+) is required as a cofactor.

The protein resides in the cytoplasm. Its function is as follows. Participates actively in the response to hyperosmotic and heat shock by preventing the aggregation of stress-denatured proteins and by disaggregating proteins, also in an autonomous, DnaK-independent fashion. Unfolded proteins bind initially to DnaJ; upon interaction with the DnaJ-bound protein, DnaK hydrolyzes its bound ATP, resulting in the formation of a stable complex. GrpE releases ADP from DnaK; ATP binding to DnaK triggers the release of the substrate protein, thus completing the reaction cycle. Several rounds of ATP-dependent interactions between DnaJ, DnaK and GrpE are required for fully efficient folding. Also involved, together with DnaK and GrpE, in the DNA replication of plasmids through activation of initiation proteins. The polypeptide is Chaperone protein DnaJ (Legionella pneumophila (strain Lens)).